We begin with the raw amino-acid sequence, 288 residues long: Probable ketoamine kinase SAOUHSC_02908 (288 aa).

86 to 88 contacts ATP; sequence TYL. Residue D191 is the Proton acceptor of the active site.

This sequence belongs to the fructosamine kinase family.

It carries out the reaction N(6)-(D-ribulosyl)-L-lysine + ATP = N(6)-(3-O-phospho-D-ribulosyl)-L-lysine + ADP + H(+). The enzyme catalyses N(6)-(D-erythrulosyl)-L-lysine + ATP = N(6)-(3-O-phospho-D-erythrulosyl)-L-lysine + ADP + H(+). The catalysed reaction is N(6)-D-ribulosyl-L-lysyl-[protein] + ATP = N(6)-(3-O-phospho-D-ribulosyl)-L-lysyl-[protein] + ADP + H(+). It catalyses the reaction N(6)-(D-erythrulosyl)-L-lysyl-[protein] + ATP = N(6)-(3-O-phospho-D-erythrulosyl)-L-lysyl-[protein] + ADP + H(+). Ketoamine kinase that phosphorylates ketoamines, such as erythruloselysine and ribuloselysine, on the third carbon of the sugar moiety to generate ketoamine 3-phosphate. Has higher activity on free lysine (erythruloselysine and ribuloselysine), than on ribuloselysine and erythruloselysine residues on glycated proteins. In Staphylococcus aureus (strain NCTC 8325 / PS 47), this protein is Probable ketoamine kinase SAOUHSC_02908.